A 2567-amino-acid chain; its full sequence is Highly reducing polyketide synthase sor1 (2567 aa).

One can recognise a Ketosynthase family 3 (KS3) domain in the interval 14-436 (SEPIAIIGMS…GANAHIILED (423 aa)). Residues Cys-187, His-322, and His-359 each act as for beta-ketoacyl synthase activity in the active site. Residues 550–841 (VFTGQGAQWW…VVEVGPHTAL (292 aa)) form a malonyl-CoA:ACP transacylase (MAT) domain region. The segment at 939-1079 (HHLLGSLVEG…GLISIEFEAS (141 aa)) is N-terminal hotdog fold. The tract at residues 939 to 1249 (HHLLGSLVEG…GFSYQSLGRS (311 aa)) is dehydratase (DH) domain. The 314-residue stretch at 939–1252 (HHLLGSLVEG…YQSLGRSVSL (314 aa)) folds into the PKS/mFAS DH domain. His-971 functions as the Proton acceptor; for dehydratase activity in the catalytic mechanism. The segment at 1095–1252 (YKRQIPPAQL…YQSLGRSVSL (158 aa)) is C-terminal hotdog fold. Asp-1161 (proton donor; for dehydratase activity) is an active-site residue. A methyltransferase (CMet) domain region spans residues 1426-1534 (LEIGASTGGI…RSLLKPGGTL (109 aa)). Residues 1852-2163 (FLPELLVFGD…TEEETGKRVL (312 aa)) form an enoyl reductase (ER) domain region. A ketoreductase (KR) domain region spans residues 2187-2369 (ASYLIVGGNG…AVSIDLSLVD (183 aa)). In terms of domain architecture, Carrier spans 2481–2558 (EAISVVGSAV…QLVANVVDRS (78 aa)). Ser-2518 is modified (O-(pantetheine 4'-phosphoryl)serine).

The protein operates within secondary metabolite biosynthesis. Its function is as follows. Highly reducing polyketide synthase; part of the SOR gene cluster that mediates the biosynthesis of sorbicillinoids, a diverse group of yellow secondary metabolites that restrict growth of competing pathogenic fungi but not of bacteria. Sorbicillinoids biosynthesis requires the action of two PKSs. The SOR cluster is required for the production of trichodimerol and dihydrotrichotetronin, with sor2 being sufficient for production of trichodimerol, but not dihydrotrichotetronin in the light. Sor1 iteratively combines three acetyl units and the growing chain is modified by the ketoacyl reductase subunit, and optional by the enoyl reductase subunit in the second cycle. The polyketide is then handed over to the PKS sor2, which adds three more acetyl units, and two methyl groups. Sor2 releases an aldehyde, which undergoes spontaneous cyclization resulting in the formation of sorbicillin or 2',3'-dihydrosorbicillin. The monooxygenase sor5 oxidizes sorbicillin and 2',3'-dihydrosorbicillin to 2',3'-dihydrosorbicillinol and sorbicillinol, respectively. The oxidoreductase sor8 further converts sorbicillinol into oxosorbicillinol. Sorbicillinol is the building block for the other sorbicillinoids such as disorbicillinol, bisvertinolon, dihydrobisvertinolone, and dihydrotrichotetronine. The chain is Highly reducing polyketide synthase sor1 from Hypocrea jecorina (strain QM6a) (Trichoderma reesei).